The primary structure comprises 50 residues: U37-theraphotoxin-Cg1a (50 aa).

The first 19 residues, 1–19 (MRVLLIIAGLALLSVVCYT), serve as a signal peptide directing secretion.

This sequence belongs to the neurotoxin 10 (Hwtx-1) family. 67 (Jztx-67) subfamily. In terms of tissue distribution, expressed by the venom gland.

The protein resides in the secreted. The polypeptide is U37-theraphotoxin-Cg1a (Chilobrachys guangxiensis (Chinese earth tiger tarantula)).